Consider the following 91-residue polypeptide: M-myrmeciitoxin-Mb3a (91 aa).

A signal peptide spans 1–21 (MKLSCLSLALAIILILAIVHS). A propeptide spanning residues 22-54 (PNMEVKALADPEADAFGEANAFGEADAFAEANA) is cleaved from the precursor.

In terms of assembly, homodimer; disulfide-linked. In terms of tissue distribution, expressed by the venom gland and reservoir.

It localises to the secreted. Its function is as follows. Causes a significant and dose-dependent histamine release, probably by influencing the signal transduction of mast cells through a non-IgE-mediated pathway. This peptide does not have cytotoxic activities. The protein is M-myrmeciitoxin-Mb3a of Myrmecia banksi (Jack jumper ant).